A 402-amino-acid polypeptide reads, in one-letter code: CCA-adding enzyme (402 aa).

The ATP site is built by Gly32 and Arg35. CTP is bound by residues Gly32 and Arg35. Positions 45 and 47 each coordinate Mg(2+). 5 residues coordinate ATP: Arg119, Asp162, Arg165, Arg168, and Arg171. CTP is bound by residues Arg119, Asp162, Arg165, Arg168, and Arg171.

This sequence belongs to the tRNA nucleotidyltransferase/poly(A) polymerase family. Bacterial CCA-adding enzyme type 3 subfamily. In terms of assembly, homodimer. Mg(2+) serves as cofactor.

It catalyses the reaction a tRNA precursor + 2 CTP + ATP = a tRNA with a 3' CCA end + 3 diphosphate. It carries out the reaction a tRNA with a 3' CCA end + 2 CTP + ATP = a tRNA with a 3' CCACCA end + 3 diphosphate. Its function is as follows. Catalyzes the addition and repair of the essential 3'-terminal CCA sequence in tRNAs without using a nucleic acid template. Adds these three nucleotides in the order of C, C, and A to the tRNA nucleotide-73, using CTP and ATP as substrates and producing inorganic pyrophosphate. tRNA 3'-terminal CCA addition is required both for tRNA processing and repair. Also involved in tRNA surveillance by mediating tandem CCA addition to generate a CCACCA at the 3' terminus of unstable tRNAs. While stable tRNAs receive only 3'-terminal CCA, unstable tRNAs are marked with CCACCA and rapidly degraded. The polypeptide is CCA-adding enzyme (Lactococcus lactis subsp. cremoris (strain MG1363)).